The chain runs to 319 residues: tRNA dimethylallyltransferase (319 aa).

Position 26–33 (Gly-26–Ser-33) interacts with ATP. Thr-28–Ser-33 is a binding site for substrate. The interaction with substrate tRNA stretch occupies residues Asp-51 to Gln-54.

The protein belongs to the IPP transferase family. Monomer. Requires Mg(2+) as cofactor.

It carries out the reaction adenosine(37) in tRNA + dimethylallyl diphosphate = N(6)-dimethylallyladenosine(37) in tRNA + diphosphate. In terms of biological role, catalyzes the transfer of a dimethylallyl group onto the adenine at position 37 in tRNAs that read codons beginning with uridine, leading to the formation of N6-(dimethylallyl)adenosine (i(6)A). The protein is tRNA dimethylallyltransferase of Salinispora tropica (strain ATCC BAA-916 / DSM 44818 / JCM 13857 / NBRC 105044 / CNB-440).